Consider the following 764-residue polypeptide: 5-methyltetrahydropteroyltriglutamate--homocysteine methyltransferase (764 aa).

Residues 16–19 and Lys-115 each bind 5-methyltetrahydropteroyltri-L-glutamate; that span reads RELK. Residues 435–437 and Glu-488 each bind L-homocysteine; that span reads IGS. L-methionine is bound by residues 435-437 and Glu-488; that span reads IGS. Residues 519–520 and Trp-565 each bind 5-methyltetrahydropteroyltri-L-glutamate; that span reads RC. Asp-603 lines the L-homocysteine pocket. Asp-603 is a binding site for L-methionine. A 5-methyltetrahydropteroyltri-L-glutamate-binding site is contributed by Glu-609. 3 residues coordinate Zn(2+): His-645, Cys-647, and Glu-669. His-698 (proton donor) is an active-site residue. Residue Cys-730 coordinates Zn(2+).

It belongs to the vitamin-B12 independent methionine synthase family. Zn(2+) serves as cofactor.

It carries out the reaction 5-methyltetrahydropteroyltri-L-glutamate + L-homocysteine = tetrahydropteroyltri-L-glutamate + L-methionine. It participates in amino-acid biosynthesis; L-methionine biosynthesis via de novo pathway; L-methionine from L-homocysteine (MetE route): step 1/1. Its function is as follows. Catalyzes the transfer of a methyl group from 5-methyltetrahydrofolate to homocysteine resulting in methionine formation. The protein is 5-methyltetrahydropteroyltriglutamate--homocysteine methyltransferase of Burkholderia pseudomallei (strain 668).